The sequence spans 139 residues: Small ribosomal subunit protein uS12 (139 aa).

Positions 1-21 are disordered; sequence MSTVSQLIKKRRSSKTSKTKA. The span at 8 to 18 shows a compositional bias: basic residues; that stretch reads IKKRRSSKTSK.

This sequence belongs to the universal ribosomal protein uS12 family. Part of the 30S ribosomal subunit. Contacts proteins S8 and S17. May interact with IF1 in the 30S initiation complex.

Its function is as follows. With S4 and S5 plays an important role in translational accuracy. In terms of biological role, interacts with and stabilizes bases of the 16S rRNA that are involved in tRNA selection in the A site and with the mRNA backbone. Located at the interface of the 30S and 50S subunits, it traverses the body of the 30S subunit contacting proteins on the other side and probably holding the rRNA structure together. The combined cluster of proteins S8, S12 and S17 appears to hold together the shoulder and platform of the 30S subunit. The polypeptide is Small ribosomal subunit protein uS12 (Onion yellows phytoplasma (strain OY-M)).